The sequence spans 725 residues: LPS-assembly protein LptD (725 aa).

An N-terminal signal peptide occupies residues 1-25 (MSLLSKLHLILYICLLLLPLRFVNA).

It belongs to the LptD family. Component of the lipopolysaccharide transport and assembly complex. Interacts with LptE and LptA.

It is found in the cell outer membrane. Functionally, together with LptE, is involved in the assembly of lipopolysaccharide (LPS) at the surface of the outer membrane. This Nitrosomonas eutropha (strain DSM 101675 / C91 / Nm57) protein is LPS-assembly protein LptD.